Reading from the N-terminus, the 425-residue chain is Exodeoxyribonuclease 7 large subunit (425 aa).

The protein belongs to the XseA family. As to quaternary structure, heterooligomer composed of large and small subunits.

The protein localises to the cytoplasm. The catalysed reaction is Exonucleolytic cleavage in either 5'- to 3'- or 3'- to 5'-direction to yield nucleoside 5'-phosphates.. Functionally, bidirectionally degrades single-stranded DNA into large acid-insoluble oligonucleotides, which are then degraded further into small acid-soluble oligonucleotides. The protein is Exodeoxyribonuclease 7 large subunit of Nocardia farcinica (strain IFM 10152).